The chain runs to 341 residues: tRNA N6-adenosine threonylcarbamoyltransferase (341 aa).

Fe cation contacts are provided by His116 and His120. Substrate is bound by residues 139–143 (LVSGG), Asp172, Gly185, and Asn274. Residue Asp302 participates in Fe cation binding.

Belongs to the KAE1 / TsaD family. It depends on Fe(2+) as a cofactor.

The protein resides in the cytoplasm. The catalysed reaction is L-threonylcarbamoyladenylate + adenosine(37) in tRNA = N(6)-L-threonylcarbamoyladenosine(37) in tRNA + AMP + H(+). Functionally, required for the formation of a threonylcarbamoyl group on adenosine at position 37 (t(6)A37) in tRNAs that read codons beginning with adenine. Is involved in the transfer of the threonylcarbamoyl moiety of threonylcarbamoyl-AMP (TC-AMP) to the N6 group of A37, together with TsaE and TsaB. TsaD likely plays a direct catalytic role in this reaction. The sequence is that of tRNA N6-adenosine threonylcarbamoyltransferase from Vesicomyosocius okutanii subsp. Calyptogena okutanii (strain HA).